Here is a 571-residue protein sequence, read N- to C-terminus: Sulfite reductase [NADPH] hemoprotein beta-component (571 aa).

[4Fe-4S] cluster-binding residues include Cys-435, Cys-441, Cys-480, and Cys-484. Siroheme is bound at residue Cys-484.

It belongs to the nitrite and sulfite reductase 4Fe-4S domain family. Alpha(8)-beta(8). The alpha component is a flavoprotein, the beta component is a hemoprotein. Requires siroheme as cofactor. It depends on [4Fe-4S] cluster as a cofactor.

The enzyme catalyses hydrogen sulfide + 3 NADP(+) + 3 H2O = sulfite + 3 NADPH + 4 H(+). The protein operates within sulfur metabolism; hydrogen sulfide biosynthesis; hydrogen sulfide from sulfite (NADPH route): step 1/1. Its function is as follows. Component of the sulfite reductase complex that catalyzes the 6-electron reduction of sulfite to sulfide. This is one of several activities required for the biosynthesis of L-cysteine from sulfate. The sequence is that of Sulfite reductase [NADPH] hemoprotein beta-component from Serratia proteamaculans (strain 568).